The sequence spans 333 residues: Ig gamma-2B chain C region (333 aa).

3 Ig-like domains span residues P6 to E96, P124 to S223, and P232 to S328. 3 disulfides stabilise this stretch: C27/C80, C147/C207, and C253/C311.

This Rattus norvegicus (Rat) protein is Ig gamma-2B chain C region (Igh-1a).